The following is a 300-amino-acid chain: Small ribosomal subunit protein uS4m (300 aa).

The S4 RNA-binding domain maps to 146-209; that stretch reads KRVDMVLLRS…MKRKLLKRLK (64 aa).

The protein belongs to the universal ribosomal protein uS4 family.

It is found in the mitochondrion. This is Small ribosomal subunit protein uS4m (mrps4) from Dictyostelium discoideum (Social amoeba).